The primary structure comprises 83 residues: Cytochrome b559 subunit alpha (83 aa).

A helical membrane pass occupies residues 21-35; sequence VIHSITIPSLFIAGW. His23 is a binding site for heme.

This sequence belongs to the PsbE/PsbF family. As to quaternary structure, heterodimer of an alpha subunit and a beta subunit. PSII is composed of 1 copy each of membrane proteins PsbA, PsbB, PsbC, PsbD, PsbE, PsbF, PsbH, PsbI, PsbJ, PsbK, PsbL, PsbM, PsbT, PsbX, PsbY, PsbZ, Psb30/Ycf12, at least 3 peripheral proteins of the oxygen-evolving complex and a large number of cofactors. It forms dimeric complexes. Requires heme b as cofactor.

It is found in the plastid. The protein localises to the chloroplast thylakoid membrane. Functionally, this b-type cytochrome is tightly associated with the reaction center of photosystem II (PSII). PSII is a light-driven water:plastoquinone oxidoreductase that uses light energy to abstract electrons from H(2)O, generating O(2) and a proton gradient subsequently used for ATP formation. It consists of a core antenna complex that captures photons, and an electron transfer chain that converts photonic excitation into a charge separation. The sequence is that of Cytochrome b559 subunit alpha from Panax ginseng (Korean ginseng).